The primary structure comprises 638 residues: ATP-dependent rRNA helicase spb4 (638 aa).

A Q motif motif is present at residues 14-42 (WDGVSPSLSEWVLEAVSSMGFTRMTPVQA). In terms of domain architecture, Helicase ATP-binding spans 45–249 (IPLFMAHKDV…RVGLRNPVKV (205 aa)). 58–65 (AVTGSGKT) contacts ATP. Residues 197 to 200 (DEAD) carry the DEAD box motif. The Helicase C-terminal domain occupies 283–437 (ALKHILHSVD…PISFSESEAT (155 aa)). 2 stretches are compositionally biased toward basic and acidic residues: residues 534–554 (LLQE…RKAT) and 577–615 (QRRQ…EERR). The tract at residues 534–638 (LLQESKEGDG…KDEEEFEGFD (105 aa)) is disordered. Residues 566–619 (RNKKQKRREQKQRRQEKNKWEKMTEEERQKIRETEQMVESIRVKNEEERRLRRA) adopt a coiled-coil conformation.

This sequence belongs to the DEAD box helicase family. DDX55/SPB4 subfamily. As to quaternary structure, component of pre-60S ribosomal complexes.

It is found in the nucleus. The protein resides in the nucleolus. It carries out the reaction ATP + H2O = ADP + phosphate + H(+). In terms of biological role, ATP-binding RNA helicase involved in the biogenesis of 60S ribosomal subunits. Binds 90S pre-ribosomal particles and dissociates from pre-60S ribosomal particles after processing of 27SB pre-rRNA. Required for the normal formation of 18S rRNA through the processing of pre-rRNAs at sites A0, A1 and A2, and the normal formation of 25S and 5.8S rRNAs through the processing of pre-rRNAs at sites C1 and C2. The sequence is that of ATP-dependent rRNA helicase spb4 from Aspergillus oryzae (strain ATCC 42149 / RIB 40) (Yellow koji mold).